The chain runs to 906 residues: MVSLGGIARKLFGSSNDRRVKSYQPNVVAINALEEQMRALSDEALAAKTVEFRQQLADGKTLDDILVPAFAVAREASRRVLGMRPFDVQLIGGMILHSNAIAEMKTGEGKTLVGTLPVYLNALAGKGVHVVTVNDYLAQRDSATMGRLYGFLGMRTGVIVHGLSDDERRDAYACDITYATNNELGFDYLRDNMKYDRGQMVQRGHNFAIVDEVDSILVDEARTPLIISGPLDDRSDLYITIDAFIPGLTKDDYEIDEKQRSANFSEDGTEKLETMLREAGLLKGESLYDVENVAIVHHINNALKAHKLFQRDKDYIVRNDEVVIIDEFTGRMMPGRRYSDGQHQALEAKERVQIQPENQTLAQITFQNYFRMYDKLAGMTGTASTEAEEFGNIYGLDVIEVPTNLPIQRIDEDDEVYRTHEEKFKAIIAEILEAHKRDQPVLVGTTSIEKSELLAELMRKQGFTNFQVLNARYHEQEAYIVAQAGVPGAVTIATNMAGRGTDIQLGGNLEMRVERDLHEVEPGPERDAAIARIAEEIQVLKQRSIAAGGLYVIASERHESRRIDNQLRGRSGRQGDPGRSKFYLSLQDDLMRIFGSDRMDGMLQKLGLKEGEAIVHPWINKALERAQKKVEARNFDIRKNVLKYDDVLNDQRKVIFEQRVELMDATDLTETVGDMRHDVIEDLVSKHIPERAYAEQWDADGLKTAVANFFDLDLPIHDWVKEEGIAEDDIRARLTEVAEKAAAEKAERFGPEIMTYVERSIVLQTLDNLWREHIVNLDHLRSVIGFRGYAQRDPLQEYKAEAFELFQALLNNLRQAVTAQLSRVELVQQPAEPQPPAMHGSHIDATTGQDEFAPLAMINETVVSPENRDPQNPTTWGRIGRNEACPCGSGKKYKHCHGAFENNEVV.

ATP-binding positions include Gln-89, 107-111 (GEGKT), and Asp-502. 4 residues coordinate Zn(2+): Cys-885, Cys-887, Cys-896, and His-897.

Belongs to the SecA family. Monomer and homodimer. Part of the essential Sec protein translocation apparatus which comprises SecA, SecYEG and auxiliary proteins SecDF-YajC and YidC. It depends on Zn(2+) as a cofactor.

The protein localises to the cell inner membrane. Its subcellular location is the cytoplasm. It carries out the reaction ATP + H2O + cellular proteinSide 1 = ADP + phosphate + cellular proteinSide 2.. Its function is as follows. Part of the Sec protein translocase complex. Interacts with the SecYEG preprotein conducting channel. Has a central role in coupling the hydrolysis of ATP to the transfer of proteins into and across the cell membrane, serving both as a receptor for the preprotein-SecB complex and as an ATP-driven molecular motor driving the stepwise translocation of polypeptide chains across the membrane. This is Protein translocase subunit SecA from Rhizobium rhizogenes (strain K84 / ATCC BAA-868) (Agrobacterium radiobacter).